A 96-amino-acid polypeptide reads, in one-letter code: uncharacterized protein (96 aa).

In terms of domain architecture, CBS spans 57 to 96; it reads MTKKVRTTKKDASISDAAALMDKHNVNRLPVVDENNKLVL.

This is an uncharacterized protein from Methanobacterium ivanovii.